The following is a 181-amino-acid chain: Oligoribonuclease (181 aa).

The Exonuclease domain occupies 8–171 (LIWIDMEMTG…ADIYDSIEEL (164 aa)). The active site involves Y129.

Belongs to the oligoribonuclease family.

Its subcellular location is the cytoplasm. Its function is as follows. 3'-to-5' exoribonuclease specific for small oligoribonucleotides. The chain is Oligoribonuclease from Nitrosomonas eutropha (strain DSM 101675 / C91 / Nm57).